The sequence spans 137 residues: Putative transcription elongation factor S-II-like protein 055R (137 aa).

The TFIIS-type zinc finger occupies 85–136 (DFITCPYEVSEGVLRCGKCDCTKILWFSKQTRSMDEPTTIFASCSNCKTRWT). The Zn(2+) site is built by Cys89, Cys103, Cys128, and Cys131.

This sequence belongs to the IIV-6 349L family.

This Aedes vexans (Inland floodwater mosquito) protein is Putative transcription elongation factor S-II-like protein 055R.